A 299-amino-acid chain; its full sequence is Very long chain fatty acid elongase 5 (299 aa).

An N-acetylmethionine modification is found at Met1. A run of 6 helical transmembrane segments spans residues 26–46 (WFLL…LLIV), 64–84 (ILVV…CELV), 112–132 (VLRW…FFIL), 150–170 (MLNI…YFGA), 205–225 (GQLL…IWPC), and 226–246 (TFPL…IALF). Residues 275–299 (AAVNGHTNSFSPLENNVKPRKLRKD) form a disordered region. Over residues 279–288 (GHTNSFSPLE) the composition is skewed to polar residues. Ser285 is modified (phosphoserine).

It belongs to the ELO family. ELOVL5 subfamily. In terms of assembly, interacts with TECR.

The protein resides in the endoplasmic reticulum membrane. It localises to the cell projection. It is found in the dendrite. The enzyme catalyses a very-long-chain acyl-CoA + malonyl-CoA + H(+) = a very-long-chain 3-oxoacyl-CoA + CO2 + CoA. It carries out the reaction (6Z,9Z,12Z)-octadecatrienoyl-CoA + malonyl-CoA + H(+) = (8Z,11Z,14Z)-3-oxoeicosatrienoyl-CoA + CO2 + CoA. It catalyses the reaction (9Z,12Z,15Z)-octadecatrienoyl-CoA + malonyl-CoA + H(+) = (11Z,14Z,17Z)-3-oxoeicosatrienoyl-CoA + CO2 + CoA. The catalysed reaction is (9Z)-hexadecenoyl-CoA + malonyl-CoA + H(+) = 3-oxo-(11Z)-octadecenoyl-CoA + CO2 + CoA. The enzyme catalyses (9Z)-octadecenoyl-CoA + malonyl-CoA + H(+) = 3-oxo-(11Z)-eicosenoyl-CoA + CO2 + CoA. It carries out the reaction (11Z)-octadecenoyl-CoA + malonyl-CoA + H(+) = 3-oxo-(13Z)-eicosenoyl-CoA + CO2 + CoA. It catalyses the reaction (9Z,12Z)-octadecadienoyl-CoA + malonyl-CoA + H(+) = (11Z,14Z)-3-oxoicosa-11,14-dienoyl-CoA + CO2 + CoA. The catalysed reaction is (6Z,9Z,12Z,15Z)-octadecatetraenoyl-CoA + malonyl-CoA + H(+) = (8Z,11Z,14Z,17Z)-3-oxoicosatetraenoyl-CoA + CO2 + CoA. The enzyme catalyses (5Z,8Z,11Z,14Z)-eicosatetraenoyl-CoA + malonyl-CoA + H(+) = (7Z,10Z,13Z,16Z)-3-oxodocosatetraenoyl-CoA + CO2 + CoA. It carries out the reaction (5Z,8Z,11Z,14Z,17Z)-eicosapentaenoyl-CoA + malonyl-CoA + H(+) = 3-oxo-(7Z,10Z,13Z,16Z,19Z)-docosapentaenoyl-CoA + CO2 + CoA. Its pathway is lipid metabolism; polyunsaturated fatty acid biosynthesis. Functionally, catalyzes the first and rate-limiting reaction of the four reactions that constitute the long-chain fatty acids elongation cycle. This endoplasmic reticulum-bound enzymatic process allows the addition of 2 carbons to the chain of long- and very long-chain fatty acids (VLCFAs) per cycle. Condensing enzyme that acts specifically toward polyunsaturated acyl-CoA with the higher activity toward C18:3(n-6) acyl-CoA. May participate in the production of monounsaturated and of polyunsaturated VLCFAs of different chain lengths that are involved in multiple biological processes as precursors of membrane lipids and lipid mediators. In conditions where the essential linoleic and alpha linoleic fatty acids are lacking it is also involved in the synthesis of Mead acid from oleic acid. This is Very long chain fatty acid elongase 5 from Macaca fascicularis (Crab-eating macaque).